We begin with the raw amino-acid sequence, 676 residues long: Translation initiation factor IF-2, mitochondrial (676 aa).

Positions 143-326 constitute a tr-type G domain; the sequence is KRAPVVTIMG…MDIRAENSPK (184 aa). Residues 152 to 159 are G1; it reads GHVDHGKT. 152-159 provides a ligand contact to GTP; the sequence is GHVDHGKT. The tract at residues 177–181 is G2; sequence GITQH. Residues 200–203 and 254–257 contribute to the GTP site; these read DTPG and TKID. The segment at 200–203 is G3; it reads DTPG. The segment at 254–257 is G4; the sequence is TKID. The G5 stretch occupies residues 296 to 298; that stretch reads SAK.

This sequence belongs to the TRAFAC class translation factor GTPase superfamily. Classic translation factor GTPase family. IF-2 subfamily.

Its subcellular location is the mitochondrion. Functionally, one of the essential components for the initiation of protein synthesis. Protects formylmethionyl-tRNA from spontaneous hydrolysis and promotes its binding to the 30S ribosomal subunits. Also involved in the hydrolysis of GTP during the formation of the 70S ribosomal complex. This chain is Translation initiation factor IF-2, mitochondrial (IFM1), found in Saccharomyces cerevisiae (strain ATCC 204508 / S288c) (Baker's yeast).